The sequence spans 178 residues: Sec-independent protein translocase protein TatB (178 aa).

The helical transmembrane segment at 1 to 21 threads the bilayer; the sequence is MFDIGWSELVVIAVVALIAIG. The span at 77–86 shows a compositional bias: polar residues; the sequence is TSGNLMTKLT. Residues 77–178 form a disordered region; sequence TSGNLMTKLT…HEAVKDAKAS (102 aa). Positions 93 to 102 are enriched in basic and acidic residues; the sequence is PKLEDLDKPA. Over residues 155–165 the composition is skewed to low complexity; that stretch reads HATPEPAPATH. Over residues 166–178 the composition is skewed to basic and acidic residues; sequence ETPHEAVKDAKAS.

The protein belongs to the TatB family. In terms of assembly, the Tat system comprises two distinct complexes: a TatABC complex, containing multiple copies of TatA, TatB and TatC subunits, and a separate TatA complex, containing only TatA subunits. Substrates initially bind to the TatABC complex, which probably triggers association of the separate TatA complex to form the active translocon.

The protein resides in the cell inner membrane. In terms of biological role, part of the twin-arginine translocation (Tat) system that transports large folded proteins containing a characteristic twin-arginine motif in their signal peptide across membranes. Together with TatC, TatB is part of a receptor directly interacting with Tat signal peptides. TatB may form an oligomeric binding site that transiently accommodates folded Tat precursor proteins before their translocation. The polypeptide is Sec-independent protein translocase protein TatB (Nitrobacter hamburgensis (strain DSM 10229 / NCIMB 13809 / X14)).